A 436-amino-acid polypeptide reads, in one-letter code: Homeobox protein PKNOX1 (436 aa).

The interval 24–49 (LKTEQDPNCSEPDVEGVSPPPVGSQT) is disordered. 2 positions are modified to phosphoserine: Ser-33 and Ser-41. One can recognise an MEIS N-terminal domain in the interval 80-163 (GSEGTTSASF…MNSETLLSGE (84 aa)). A DNA-binding region (homeobox; TALE-type) is located at residues 259 to 321 (SKNKRGVLPK…NARRRILQPM (63 aa)). Residues 401 to 436 (AEQSEDDSVDSTGDGGAALAPGHLGGLVLENSDSLQ) form a disordered region.

It belongs to the TALE/MEIS homeobox family. As to quaternary structure, interacts with MN1.

The protein localises to the nucleus. In terms of biological role, activates transcription in the presence of PBX1A and HOXA1. This is Homeobox protein PKNOX1 from Bos taurus (Bovine).